A 373-amino-acid polypeptide reads, in one-letter code: P2Y purinoceptor 2 (373 aa).

At 1–32 (MAADLEPWNSTINGTWEGDELGYKCRFNEDFK) the chain is on the extracellular side. N-linked (GlcNAc...) asparagine glycosylation is found at Asn-9 and Asn-13. Residues 33–59 (YVLLPVSYGVVCVLGLCLNVVALYIFL) form a helical membrane-spanning segment. Residues 60–70 (CRLKTWNASTT) lie on the Cytoplasmic side of the membrane. The chain crosses the membrane as a helical span at residues 71 to 93 (YMFHLAVSDSLYAASLPLLVYYY). The Extracellular portion of the chain corresponds to 94–110 (ARGDHWPFSTVLCKLVR). Residues Cys-106 and Cys-183 are joined by a disulfide bond. Residues 111 to 129 (FLFYTNLYCSILFLTCISV) form a helical membrane-spanning segment. The Cytoplasmic segment spans residues 130 to 152 (HRCLGVLRPLHSLRWGRARYARR). Residues 153-172 (VAAVVWVLVLACQAPVLYFV) form a helical membrane-spanning segment. Over 173–194 (TTSVRGTRITCHDTSARELFSH) the chain is Extracellular. Residues 195–220 (FVAYSSVMLGLLFAVPFSVILVCYVL) form a helical membrane-spanning segment. Topologically, residues 221-246 (MARRLLKPAYGTTGGLPRAKRKSVRT) are cytoplasmic. A helical transmembrane segment spans residues 247–269 (IALVLAVFALCFLPFHVTRTLYY). The Extracellular segment spans residues 270–287 (SFRSLDLSCHTLNAINMA). The chain crosses the membrane as a helical span at residues 288–309 (YKITRPLASANSCLDPVLYFLA). Residues 310–373 (GQRLVRFARD…AGSETKDIRL (64 aa)) lie on the Cytoplasmic side of the membrane. The interval 318–373 (RDAKPPTEPTPSPQARRKLGLHRPNRTVRKDLSVSSDDSRRTESTPAGSETKDIRL) is disordered. Positions 332-344 (ARRKLGLHRPNRT) are enriched in basic residues. Residues 345 to 360 (VRKDLSVSSDDSRRTE) show a composition bias toward basic and acidic residues.

Belongs to the G-protein coupled receptor 1 family. In terms of tissue distribution, spleen, testis, kidney, liver, lung, heart and brain.

Its subcellular location is the cell membrane. Its function is as follows. Receptor for ATP and UTP coupled to G-proteins that activate a phosphatidylinositol-calcium second messenger system. The affinity range is UTP = ATP &gt; ATP-gamma-S &gt;&gt; 2-methylthio-ATP = ADP. The chain is P2Y purinoceptor 2 (P2ry2) from Mus musculus (Mouse).